Here is a 301-residue protein sequence, read N- to C-terminus: Sulfate adenylyltransferase subunit 2 (301 aa).

A disordered region spans residues 279-301 (RQGRMIDHDSSGSMEEKKKQGYF).

The protein belongs to the PAPS reductase family. CysD subfamily. Heterodimer composed of CysD, the smaller subunit, and CysN.

The catalysed reaction is sulfate + ATP + H(+) = adenosine 5'-phosphosulfate + diphosphate. Its pathway is sulfur metabolism; hydrogen sulfide biosynthesis; sulfite from sulfate: step 1/3. With CysN forms the ATP sulfurylase (ATPS) that catalyzes the adenylation of sulfate producing adenosine 5'-phosphosulfate (APS) and diphosphate, the first enzymatic step in sulfur assimilation pathway. APS synthesis involves the formation of a high-energy phosphoric-sulfuric acid anhydride bond driven by GTP hydrolysis by CysN coupled to ATP hydrolysis by CysD. This is Sulfate adenylyltransferase subunit 2 from Marinomonas sp. (strain MWYL1).